Consider the following 219-residue polypeptide: C-type lectin domain family 4 member E (219 aa).

Topologically, residues methionine 1–serine 19 are cytoplasmic. A helical; Signal-anchor for type II membrane protein membrane pass occupies residues glutamine 20–threonine 40. Over arginine 41–leucine 219 the chain is Extracellular. Asparagine 62 carries N-linked (GlcNAc...) asparagine glycosylation. A disulfide bridge connects residues cysteine 80 and cysteine 91. The region spanning phenylalanine 87 to glutamate 206 is the C-type lectin domain. N-linked (GlcNAc...) asparagine glycosylation occurs at asparagine 107. 2 disulfides stabilise this stretch: cysteine 108–cysteine 205 and cysteine 179–cysteine 197. Residues valine 117, asparagine 119, glutamate 123, glutamate 169, asparagine 171, asparagine 193, aspartate 194, and glutamate 206 each coordinate Ca(2+). Residues glutamate 169–asparagine 171 carry the Confers specificity for glucose/mannose-type carbohydrates motif.

Monomer and homodimer. Interacts with signaling adapter Fc receptor gamma chain/FCER1G to form a functional complex; the interaction is direct. Alternatively, acts as a bridge for interaction between CLEC4D and FCER1G. A heterodimer of CLEC4E and CLEC4D associates with FCER1G to form a functional complex. Interacts with SAP130 nuclear protein that is released from necrotic cells; the interaction is direct. As to expression, expressed in monocytes and macrophages.

The protein resides in the cell membrane. It localises to the cell projection. The protein localises to the phagocytic cup. Calcium-dependent lectin that acts as a pattern recognition receptor (PRR) of the innate immune system: recognizes damage-associated molecular patterns (DAMPs) of abnormal self and pathogen-associated molecular patterns (PAMPs) of bacteria and fungi. The PAMPs notably include mycobacterial trehalose 6,6'-dimycolate (TDM), a cell wall glycolipid with potent adjuvant immunomodulatory functions. Interacts with signaling adapter Fc receptor gamma chain/FCER1G to form a functional complex in myeloid cells. Binding of mycobacterial trehalose 6,6'-dimycolate (TDM) to this receptor complex leads to phosphorylation of the immunoreceptor tyrosine-based activation motif (ITAM) of FCER1G, triggering activation of SYK, CARD9 and NF-kappa-B, consequently driving maturation of antigen-presenting cells and shaping antigen-specific priming of T-cells toward effector T-helper 1 and T-helper 17 cell subtypes. Also recognizes alpha-mannose residues on pathogenic fungi of the genus Malassezia and mediates macrophage activation. Through recognition of DAMPs released upon nonhomeostatic cell death, enables immune sensing of damaged self and promotes inflammatory cell infiltration into the damaged tissue. In Homo sapiens (Human), this protein is C-type lectin domain family 4 member E.